A 101-amino-acid chain; its full sequence is MYAIVKTGGKQYKVAEGDLVKVEKIEGEPGASVALTPVLLVDGADVTTAADKLASVSVNTEIVEHTKGPKIKILKYKNKTGYKKRQGHRQKLTVLKVTGIK.

It belongs to the bacterial ribosomal protein bL21 family. Part of the 50S ribosomal subunit. Contacts protein L20.

This protein binds to 23S rRNA in the presence of protein L20. The protein is Large ribosomal subunit protein bL21 of Corynebacterium efficiens (strain DSM 44549 / YS-314 / AJ 12310 / JCM 11189 / NBRC 100395).